The sequence spans 84 residues: Beta-cardiotoxin CTX27 (84 aa).

Residues methionine 1–threonine 21 form the signal peptide. 4 disulfides stabilise this stretch: cysteine 24–cysteine 43, cysteine 36–cysteine 61, cysteine 65–cysteine 76, and cysteine 77–cysteine 82.

It belongs to the three-finger toxin family. Short-chain subfamily. Aminergic toxin sub-subfamily. Expressed by the venom gland.

Its subcellular location is the secreted. Its function is as follows. Acts as a beta-blocker by binding to beta-1 and beta-2 adrenergic receptors (ADRB1 and ADRB2). It dose-dependently decreases the heart rate (bradycardia), whereas conventional cardiotoxins increases it. At 100 mg/kg, intraperitoneal injection into mice provokes labored breathing, impaired locomotion, lack of response to external stimuli, and death (after 30 minutes). In Ophiophagus hannah (King cobra), this protein is Beta-cardiotoxin CTX27.